The following is a 276-amino-acid chain: ATP synthase subunit a (276 aa).

6 helical membrane passes run 47 to 67 (WHIDSLLFSVGLGVLFLWLFY), 107 to 127 (IAPLGLTIFVWVFLMNLMDLI), 152 to 172 (DLNVTLGLALSVFALIVFYSI), 188 to 208 (PFNHWALIPINFVLETVTLVA), 226 to 246 (LIFILIALMPWWAQFALSVPW), and 247 to 267 (AIFHILVIVLQAFIFMMLTIV).

This sequence belongs to the ATPase A chain family. In terms of assembly, F-type ATPases have 2 components, CF(1) - the catalytic core - and CF(0) - the membrane proton channel. CF(1) has five subunits: alpha(3), beta(3), gamma(1), delta(1), epsilon(1). CF(0) has three main subunits: a(1), b(2) and c(9-12). The alpha and beta chains form an alternating ring which encloses part of the gamma chain. CF(1) is attached to CF(0) by a central stalk formed by the gamma and epsilon chains, while a peripheral stalk is formed by the delta and b chains.

Its subcellular location is the cell inner membrane. Functionally, key component of the proton channel; it plays a direct role in the translocation of protons across the membrane. This Shewanella pealeana (strain ATCC 700345 / ANG-SQ1) protein is ATP synthase subunit a.